Reading from the N-terminus, the 72-residue chain is Translation initiation factor IF-1 (72 aa).

The S1-like domain maps to 1 to 72; sequence MSKSDYIELE…TKGRITFRHK (72 aa).

This sequence belongs to the IF-1 family. In terms of assembly, component of the 30S ribosomal translation pre-initiation complex which assembles on the 30S ribosome in the order IF-2 and IF-3, IF-1 and N-formylmethionyl-tRNA(fMet); mRNA recruitment can occur at any time during PIC assembly.

Its subcellular location is the cytoplasm. In terms of biological role, one of the essential components for the initiation of protein synthesis. Stabilizes the binding of IF-2 and IF-3 on the 30S subunit to which N-formylmethionyl-tRNA(fMet) subsequently binds. Helps modulate mRNA selection, yielding the 30S pre-initiation complex (PIC). Upon addition of the 50S ribosomal subunit IF-1, IF-2 and IF-3 are released leaving the mature 70S translation initiation complex. The sequence is that of Translation initiation factor IF-1 from Vesicomyosocius okutanii subsp. Calyptogena okutanii (strain HA).